The primary structure comprises 542 residues: GMP synthase [glutamine-hydrolyzing] (542 aa).

The Glutamine amidotransferase type-1 domain maps to 28-218; it reads MIVILDFGSQ…VYHICECEPT (191 aa). C105 acts as the Nucleophile in catalysis. Catalysis depends on residues H192 and E194. One can recognise a GMPS ATP-PPase domain in the interval 219 to 417; it reads WTTEAFVEEA…IGLPEEIVRR (199 aa). 246–252 serves as a coordination point for ATP; it reads SGGVDSS.

As to quaternary structure, homodimer.

It carries out the reaction XMP + L-glutamine + ATP + H2O = GMP + L-glutamate + AMP + diphosphate + 2 H(+). It functions in the pathway purine metabolism; GMP biosynthesis; GMP from XMP (L-Gln route): step 1/1. Catalyzes the synthesis of GMP from XMP. This chain is GMP synthase [glutamine-hydrolyzing], found in Gloeothece citriformis (strain PCC 7424) (Cyanothece sp. (strain PCC 7424)).